A 278-amino-acid chain; its full sequence is Proteolipid protein DM beta (278 aa).

The next 4 helical transmembrane spans lie at 30–46 (LIATILLYAGVALFCGC), 84–100 (VIYGVAAAFFVYGILLM), 130–146 (FIMLTYIFMLAWLGVTA), and 213–229 (LFIVALAGAGAAVIAMV).

The protein belongs to the myelin proteolipid protein family.

Its subcellular location is the membrane. In Squalus acanthias (Spiny dogfish), this protein is Proteolipid protein DM beta.